Reading from the N-terminus, the 226-residue chain is Thiopurine S-methyltransferase (226 aa).

Residues tryptophan 16, methionine 51, glutamate 72, and arginine 131 each coordinate S-adenosyl-L-methionine.

Belongs to the class I-like SAM-binding methyltransferase superfamily. TPMT family.

The protein localises to the cytoplasm. It catalyses the reaction S-adenosyl-L-methionine + a thiopurine = S-adenosyl-L-homocysteine + a thiopurine S-methylether.. The chain is Thiopurine S-methyltransferase from Francisella tularensis subsp. tularensis (strain SCHU S4 / Schu 4).